The chain runs to 61 residues: UPF0434 protein PSPA7_2181 (61 aa).

It belongs to the UPF0434 family.

The protein is UPF0434 protein PSPA7_2181 of Pseudomonas paraeruginosa (strain DSM 24068 / PA7) (Pseudomonas aeruginosa (strain PA7)).